The primary structure comprises 373 residues: MSQNYYQILGVSKTASQADLKKAYLKLAKQYHPDTTDAKDAEKKFKEINAAYDVLKDEQTRAAYDRLGHDAFQNQQSRGGGGNHGGFHPDINDIFGDFFSDFMGGSRRSSRPTSAKVRGSDLKYNLTINLEEAFHGIEKNISFSSTVKCDTCHGSGSEKGETVTTCDACSGVGATRMQQGFFTIEQACHKCQGNGHIIKNPCKKCHGMGRYHKQRNLSVNIPAGVENGTRIRHTGEGEAGIRGGNSGDLYVDITIKPHDIYKVDGANLHCKLPISFVNAALGGEIEVPVIEGGKVNLTIPAGTQNGDQLRLRSKGMSKMRSTIRGDMLTHIHVEVPKNLSKRQRELLEEFKKESINEKENDGSFFNKMKSLWS.

A J domain is found at 4–68 (NYYQILGVSK…QTRAAYDRLG (65 aa)). The CR-type zinc-finger motif lies at 136-214 (GIEKNISFSS…CHGMGRYHKQ (79 aa)). Zn(2+)-binding residues include Cys149, Cys152, Cys166, Cys169, Cys188, Cys191, Cys202, and Cys205. 4 CXXCXGXG motif repeats span residues 149-156 (CDTCHGSG), 166-173 (CDACSGVG), 188-195 (CHKCQGNG), and 202-209 (CKKCHGMG).

The protein belongs to the DnaJ family. In terms of assembly, homodimer. Requires Zn(2+) as cofactor.

Its subcellular location is the cytoplasm. Functionally, participates actively in the response to hyperosmotic and heat shock by preventing the aggregation of stress-denatured proteins and by disaggregating proteins, also in an autonomous, DnaK-independent fashion. Unfolded proteins bind initially to DnaJ; upon interaction with the DnaJ-bound protein, DnaK hydrolyzes its bound ATP, resulting in the formation of a stable complex. GrpE releases ADP from DnaK; ATP binding to DnaK triggers the release of the substrate protein, thus completing the reaction cycle. Several rounds of ATP-dependent interactions between DnaJ, DnaK and GrpE are required for fully efficient folding. Also involved, together with DnaK and GrpE, in the DNA replication of plasmids through activation of initiation proteins. This chain is Chaperone protein DnaJ, found in Rickettsia peacockii (strain Rustic).